A 1040-amino-acid polypeptide reads, in one-letter code: MQVLPPSSTGGPSRLFIMRPVATTLLMVAILLAGIIGYRALPVSALPEVDYPTIQVVTLYPGASPDVMTSAVTAPLERQFGQMSGLKQMSSQSSGGASVITLQFQLTLPLDVAEQEVQAAINAATNLLPSDLPNPPVYSKVNPADPPIMTLAVTSTAMPMTQVEDMVETRVAQKISQISGVGLVTLSGGQRPAVRVKLNAQAIAALGLTSETVRTAITGANVNSAKGSLDGPSRAVTLSANDQMQSAEEYRQLIIAYQNGAPIRLGDVATVEQGAENSWLGAWANKEQAIVMNVQRQPGANIISTADSIRQMLPQLTESLPKSVKVTVLSDRTTNIRASVDDTQFELMMAIALVVMIIYLFLRNIPATIIPGVAVPLSLIGTFAVMVFLDFSINNLTLMALTIATGFVVDDAIVVIENISRYIEKGEKPLAAALKGAGEIGFTIISLTFSLIAVLIPLLFMGDIVGRLFREFAITLAVAILISAVVSLTLTPMMCARMLSQESLRKQNRFSRASEKMFDRIIAAYGQGLAKVLNHPWLTLSVALSTLLLSVLLWVFIPKGFFPVQDNGIIQGTLQAPQSSSFANMAQRQRQVADVILQDPAVQSLTSFVGVDGTNPSLNSARLQINLKPLEERDDRVQKVIARLQTAVDKVPGVDLFLQPTQDLTIDTQVSRTQYQFTLQATSLDALSTWVPQLMEKLQQLPQLSDVSSDWQDKGLVAYVNVDRDSASRLGISMADVDNALYNAFGQRLISTIYTQANQYRVVLEHNTENTPGLAALDTIRLTSSDGGVVPLSSIAKIEQRFAPLSINHLDQFPVTTISFNVPDNYSLGDAVQAIMDTEKTLNLPVDITTQFQGSTLAFQSALGSTVWLIVAAVVAMYIVLGILYESFIHPITILSTLPTAGVGALLALMIAGSELDVIAIIGIILLIGIVKKNAIMMIDFALAAEREQGMSPRDAIYQACLLRFRPILMTTLAALLGALPLMLSTGVGAELRRPLGIGMVGGLIVSQVLTLFTTPVIYLLFDRLALWTKSRFARHEEEA.

Helical transmembrane passes span 16-36, 347-367, 369-389, 396-416, 440-460, 472-492, 537-557, 863-883, 888-908, 911-931, 968-988, and 998-1018; these read FIMRPVATTLLMVAILLAGII, LMMAIALVVMIIYLFLRNIPA, IIPGVAVPLSLIGTFAVMVFL, LTLMALTIATGFVVDDAIVVI, IGFTIISLTFSLIAVLIPLLF, FAITLAVAILISAVVSLTLTP, WLTLSVALSTLLLSVLLWVFI, LGSTVWLIVAAVVAMYIVLGI, FIHPITILSTLPTAGVGALLA, IAGSELDVIAIIGIILLIGIV, ILMTTLAALLGALPLMLSTGV, and IGMVGGLIVSQVLTLFTTPVI.

The protein belongs to the resistance-nodulation-cell division (RND) (TC 2.A.6) family. MdtB subfamily. In terms of assembly, part of a tripartite efflux system composed of MdtA, MdtB and MdtC. MdtB forms a heteromultimer with MdtC.

The protein resides in the cell inner membrane. Its function is as follows. The MdtABC tripartite complex confers resistance against novobiocin and deoxycholate. This Escherichia coli (strain 55989 / EAEC) protein is Multidrug resistance protein MdtB.